The following is a 316-amino-acid chain: Zinc finger protein 367 (316 aa).

The disordered stretch occupies residues 61–97; that stretch reads VTLGPGSGSGAASPTRTSSSPAEADPLSCPEHLKDGI. Over residues 70–82 the composition is skewed to low complexity; sequence GAASPTRTSSSPA. 2 C2H2-type zinc fingers span residues 121 to 143 and 149 to 173; these read IRCNICNRVFPREKSLQAHKRTH and YLCDYPDCGKAFVQSGQLKTHQRLH. The interval 234-294 is disordered; it reads QTREQRSPVP…GGVVTARRRL (61 aa). Positions 255–278 are enriched in acidic residues; that stretch reads EDQEQQDPLDFLPSDEGEEEEQEE. The stretch at 289–313 forms a coiled coil; it reads TARRRLQEQRERLHGALALIELANN.

The protein belongs to the krueppel C2H2-type zinc-finger protein family.

The protein resides in the nucleus. In terms of biological role, transcriptional activator. This is Zinc finger protein 367 (znf367) from Danio rerio (Zebrafish).